The sequence spans 155 residues: Probable methanogenesis regulatory protein FilR2 (155 aa).

A Response regulatory domain is found at 18 to 142 (IILLVEDNNA…DLKRTVEEIK (125 aa)). Aspartate 75 is modified (4-aspartylphosphate).

Phosphorylated by FilI.

Its function is as follows. Member of the two-component regulatory system FilI/FilRs, which is involved in the regulation of methanogenesis. In Methanothrix harundinacea (strain 6Ac) (Methanosaeta harundinacea), this protein is Probable methanogenesis regulatory protein FilR2.